Reading from the N-terminus, the 351-residue chain is UDP-N-acetylenolpyruvoylglucosamine reductase (351 aa).

The FAD-binding PCMH-type domain occupies 11-213 (GVGGSIACFI…KQVRDQVLRI (203 aa)). Arginine 158 is an active-site residue. Catalysis depends on serine 239, which acts as the Proton donor. Glutamate 343 is a catalytic residue.

It belongs to the MurB family. FAD serves as cofactor.

It localises to the cytoplasm. It carries out the reaction UDP-N-acetyl-alpha-D-muramate + NADP(+) = UDP-N-acetyl-3-O-(1-carboxyvinyl)-alpha-D-glucosamine + NADPH + H(+). The protein operates within cell wall biogenesis; peptidoglycan biosynthesis. Cell wall formation. The polypeptide is UDP-N-acetylenolpyruvoylglucosamine reductase (Tropheryma whipplei (strain Twist) (Whipple's bacillus)).